The sequence spans 416 residues: 3-hydroxy-3-methylglutaryl coenzyme A reductase AN1593 (416 aa).

The active-site Charge relay system is the glutamate 103. Residue asparagine 167 is glycosylated (N-linked (GlcNAc...) asparagine). Lysine 236 (charge relay system) is an active-site residue. Asparagine 277 carries an N-linked (GlcNAc...) asparagine glycan. Aspartate 312 serves as the catalytic Charge relay system. A helical membrane pass occupies residues 380–400 (LALLVAAGVLAGELSLCSALS). The active-site Proton donor is histidine 408.

The protein belongs to the HMG-CoA reductase family.

It localises to the membrane. The enzyme catalyses (R)-mevalonate + 2 NADP(+) + CoA = (3S)-3-hydroxy-3-methylglutaryl-CoA + 2 NADPH + 2 H(+). Its pathway is metabolic intermediate biosynthesis; (R)-mevalonate biosynthesis; (R)-mevalonate from acetyl-CoA: step 3/3. Functionally, 3-hydroxy-3-methylglutaryl coenzyme A reductase; part of the gene cluster that mediates the biosynthesis of the diterpene ent-pimara-8(14),15-diene (PD). Within the cluster, the HMG-CoA reductase AN1593 functions in the mevalonate pathway, which produces isoprenoid precursors. The geranylgeranyl pyrophosphate (GGPP) synthase AN1592 is needed in the formation of GGPP, the precursor for diterpenes. Lastly, the pimaradiene synthase pbcA performs the 2 cyclization steps that convert GGPP to ent-pimara-8(14),15-diene. The putative roles of the remaining cluster enzymes in ent-pimara-8(14),15-diene biosynthesis is unclear. The cytochrome P450 monooxygenase AN1598, the glutathione S-transferase AN1595, the oxidoreductases AN1596 and AN1597 probably function as decorative enzymes. It is possible that in biological conditions the compound is oxidized to ent-pimara-8(14),15-dien-19-oic acid, which is a bioactive diterpene compound predominant in many plant extracts. This is 3-hydroxy-3-methylglutaryl coenzyme A reductase AN1593 from Emericella nidulans (strain FGSC A4 / ATCC 38163 / CBS 112.46 / NRRL 194 / M139) (Aspergillus nidulans).